We begin with the raw amino-acid sequence, 382 residues long: Histidinol-phosphate aminotransferase (382 aa).

A disordered region spans residues 1-24; the sequence is MTSAPRPRPTLDDLPLREDLRGKS. Over residues 9–22 the composition is skewed to basic and acidic residues; sequence PTLDDLPLREDLRG. K233 carries the N6-(pyridoxal phosphate)lysine modification.

This sequence belongs to the class-II pyridoxal-phosphate-dependent aminotransferase family. Histidinol-phosphate aminotransferase subfamily. As to quaternary structure, homodimer. The cofactor is pyridoxal 5'-phosphate.

It catalyses the reaction L-histidinol phosphate + 2-oxoglutarate = 3-(imidazol-4-yl)-2-oxopropyl phosphate + L-glutamate. It functions in the pathway amino-acid biosynthesis; L-histidine biosynthesis; L-histidine from 5-phospho-alpha-D-ribose 1-diphosphate: step 7/9. In Mycobacterium ulcerans (strain Agy99), this protein is Histidinol-phosphate aminotransferase.